Here is a 190-residue protein sequence, read N- to C-terminus: Cancer-related nucleoside-triphosphatase homolog (190 aa).

Ala-2 is subject to N-acetylalanine. ATP contacts are provided by residues 9-16 (GPPGVGKT) and 109-116 (ICVIDEVG). N6-acetyllysine is present on Lys-165.

Belongs to the THEP1 NTPase family. As to quaternary structure, monomer.

It catalyses the reaction a ribonucleoside 5'-triphosphate + H2O = a ribonucleoside 5'-diphosphate + phosphate + H(+). The enzyme catalyses 5-methyl-UTP + H2O = 5-methyl-UDP + phosphate + H(+). The catalysed reaction is CTP + H2O = CDP + phosphate + H(+). It carries out the reaction ATP + H2O = ADP + phosphate + H(+). It catalyses the reaction GTP + H2O = GDP + phosphate + H(+). In terms of biological role, has nucleotide phosphatase activity towards ATP, GTP, CTP, TTP and UTP. Hydrolyzes nucleoside diphosphates with lower efficiency. This is Cancer-related nucleoside-triphosphatase homolog (NTPCR) from Bos taurus (Bovine).